A 273-amino-acid chain; its full sequence is Putative esterase/lipase 3 (273 aa).

His-34 is an active-site residue. Residue Ser-100 is the Charge relay system of the active site.

Belongs to the lipase/esterase LIP3/BchO family.

The protein is Putative esterase/lipase 3 of Mycoplasma genitalium (strain ATCC 33530 / DSM 19775 / NCTC 10195 / G37) (Mycoplasmoides genitalium).